A 257-amino-acid polypeptide reads, in one-letter code: UPF0246 protein BPP3440 (257 aa).

It belongs to the UPF0246 family.

This is UPF0246 protein BPP3440 from Bordetella parapertussis (strain 12822 / ATCC BAA-587 / NCTC 13253).